The sequence spans 501 residues: NAD(P)H-quinone oxidoreductase chain 4, chloroplastic (501 aa).

14 helical membrane passes run 5 to 25, 38 to 58, 88 to 108, 114 to 131, 135 to 155, 168 to 188, 209 to 229, 243 to 263, 273 to 293, 306 to 326, 331 to 351, 387 to 407, 417 to 437, and 464 to 484; these read FPWL…IFFL, TCIC…HFQL, IGPI…AWPV, LFYL…GLFS, LLLF…LLSM, FILY…GMGL, ALEI…SPII, HYST…YGLI, AHSL…IYAA, IACS…SITD, GAIL…FLSG, LALP…GIIT, ILIT…LLSM, and FVSI…DCVF.

The protein belongs to the complex I subunit 4 family.

It localises to the plastid. It is found in the chloroplast thylakoid membrane. The enzyme catalyses a plastoquinone + NADH + (n+1) H(+)(in) = a plastoquinol + NAD(+) + n H(+)(out). It catalyses the reaction a plastoquinone + NADPH + (n+1) H(+)(in) = a plastoquinol + NADP(+) + n H(+)(out). The chain is NAD(P)H-quinone oxidoreductase chain 4, chloroplastic from Dioscorea elephantipes (Elephant's foot yam).